The sequence spans 560 residues: Mitogen-activated protein kinase kinase kinase 3 (560 aa).

A disordered region spans residues 70–91 (KRQSSSSSDNTSDKEEVETEET). The Protein kinase domain maps to 303–557 (WLKGQLLGRG…AAELLHHPFV (255 aa)). ATP contacts are provided by residues 309 to 317 (LGRGSYASV) and Lys-331. Asp-426 serves as the catalytic Proton acceptor.

Belongs to the protein kinase superfamily. STE Ser/Thr protein kinase family. MAP kinase kinase kinase subfamily. Expressed at low levels in roots, stems, siliques, leaves, seedlings and flower buds.

It carries out the reaction L-seryl-[protein] + ATP = O-phospho-L-seryl-[protein] + ADP + H(+). The enzyme catalyses L-threonyl-[protein] + ATP = O-phospho-L-threonyl-[protein] + ADP + H(+). The chain is Mitogen-activated protein kinase kinase kinase 3 from Arabidopsis thaliana (Mouse-ear cress).